A 259-amino-acid chain; its full sequence is Probable 6-phosphogluconolactonase 2 (259 aa).

The protein belongs to the glucosamine/galactosamine-6-phosphate isomerase family. 6-phosphogluconolactonase subfamily.

It is found in the cytoplasm. The protein resides in the cytosol. It catalyses the reaction 6-phospho-D-glucono-1,5-lactone + H2O = 6-phospho-D-gluconate + H(+). Its pathway is carbohydrate degradation; pentose phosphate pathway; D-ribulose 5-phosphate from D-glucose 6-phosphate (oxidative stage): step 2/3. Functionally, catalyzes the hydrolysis of 6-phosphogluconolactone to 6-phosphogluconate. This is Probable 6-phosphogluconolactonase 2 from Arabidopsis thaliana (Mouse-ear cress).